We begin with the raw amino-acid sequence, 415 residues long: Runt-related transcription factor 3 (415 aa).

Disordered regions lie at residues 1 to 48 (MRIP…GGRA), 176 to 266 (GPRE…FPDP), and 375 to 415 (NLMN…WRPY). Residues 54 to 182 (SMVDVLADHA…TVDGPREPRR (129 aa)) enclose the Runt domain. Positions 186–205 (KLEDQTKPFPDRFGDLERLR) are enriched in basic and acidic residues. A Glycyl lysine isopeptide (Lys-Gly) (interchain with G-Cter in SUMO2) cross-link involves residue K192. Residues 209-240 (TPSTPSPRGSLSTTSHFSSQPQTPIQGTSELN) are compositionally biased toward polar residues. S243 bears the Phosphoserine mark. The segment covering 393 to 402 (SHSNSPTALS) has biased composition (polar residues). Over residues 406 to 415 (RMDEAVWRPY) the composition is skewed to basic and acidic residues.

In terms of assembly, heterodimer with CBFB. RUNX3 binds DNA as a monomer and through the Runt domain. DNA-binding is increased by heterodimerization. Interacts with TLE1 and SUV39H1. The tyrosine phosphorylated form (via runt domain) interacts with SRC (via protein kinase domain). Interacts with FYN and LCK. Interacts with FOXP3. Interacts with ZFHX3. Interacts with TBX21. Post-translationally, phosphorylated on tyrosine residues by SRC. Phosphorylated by LCK and FYN. As to expression, expressed in gastric cancer tissues (at protein level).

It is found in the nucleus. Its subcellular location is the cytoplasm. In terms of biological role, forms the heterodimeric complex core-binding factor (CBF) with CBFB. RUNX members modulate the transcription of their target genes through recognizing the core consensus binding sequence 5'-TGTGGT-3', or very rarely, 5'-TGCGGT-3', within their regulatory regions via their runt domain, while CBFB is a non-DNA-binding regulatory subunit that allosterically enhances the sequence-specific DNA-binding capacity of RUNX. The heterodimers bind to the core site of a number of enhancers and promoters, including murine leukemia virus, polyomavirus enhancer, T-cell receptor enhancers, LCK, IL3 and GM-CSF promoters. May be involved in the control of cellular proliferation and/or differentiation. In association with ZFHX3, up-regulates CDKN1A promoter activity following TGF-beta stimulation. CBF complexes repress ZBTB7B transcription factor during cytotoxic (CD8+) T cell development. They bind to RUNX-binding sequence within the ZBTB7B locus acting as transcriptional silencer and allowing for cytotoxic T cell differentiation. CBF complexes binding to the transcriptional silencer is essential for recruitment of nuclear protein complexes that catalyze epigenetic modifications to establish epigenetic ZBTB7B silencing. Necessary for the development and survival of sensory neurons expressing parvalbumin. This Homo sapiens (Human) protein is Runt-related transcription factor 3 (RUNX3).